We begin with the raw amino-acid sequence, 406 residues long: Nicotinate phosphoribosyltransferase (406 aa).

A Phosphohistidine; by autocatalysis modification is found at His227.

The protein belongs to the NAPRTase family. In terms of processing, transiently phosphorylated on a His residue during the reaction cycle. Phosphorylation strongly increases the affinity for substrates and increases the rate of nicotinate D-ribonucleotide production. Dephosphorylation regenerates the low-affinity form of the enzyme, leading to product release.

It catalyses the reaction nicotinate + 5-phospho-alpha-D-ribose 1-diphosphate + ATP + H2O = nicotinate beta-D-ribonucleotide + ADP + phosphate + diphosphate. Its pathway is cofactor biosynthesis; NAD(+) biosynthesis; nicotinate D-ribonucleotide from nicotinate: step 1/1. In terms of biological role, catalyzes the synthesis of beta-nicotinate D-ribonucleotide from nicotinate and 5-phospho-D-ribose 1-phosphate at the expense of ATP. The protein is Nicotinate phosphoribosyltransferase of Methanosarcina mazei (strain ATCC BAA-159 / DSM 3647 / Goe1 / Go1 / JCM 11833 / OCM 88) (Methanosarcina frisia).